The following is a 418-amino-acid chain: MFHRLLIATVVGILAAFAVAGFRHAMLLLEWLFLNNDSGSLVNAATNLSPWRRLLTPALGGLAAGLLLMGWQKFTQQRPHAPTDYMEALQTDGQFDYAASLVKSLASLLVVTSGSAIGREGAMILLAALAASCFAQRFTPRQEWKLWIACGAAAGMAAAYRAPLAGSLFIAEVLFGTMMLASLGPVIISAVVALLVSNLINHSDALLYNVQLSVTVQARDYALIISTGVLAGLCGPLLLTLMNACHRGFVSLKLAPPWQLALGGLIVGLLSLFTPAVWGNGYSTVQSFLTAPPLLMIIAGIFLCKLCAVLASSGSGAPGGVFTPTLFIGLAIGMLYGRSLGLWFPDGEEITLLLGLTGMATLLAATTHAPIMSTLMICEMTGEYQLLPGLLIACVIASVISRTLHRDSIYRQHTAQHS.

A topological domain (cytoplasmic) is located at residue methionine 1. Residues 2–22 (FHRLLIATVVGILAAFAVAGF) traverse the membrane as a helical segment. At 23 to 53 (RHAMLLLEWLFLNNDSGSLVNAATNLSPWRR) the chain is on the periplasmic side. A helical membrane pass occupies residues 54–74 (LLTPALGGLAAGLLLMGWQKF). Residues 75–145 (TQQRPHAPTD…QRFTPRQEWK (71 aa)) lie on the Cytoplasmic side of the membrane. Residues 146–166 (LWIACGAAAGMAAAYRAPLAG) form a helical membrane-spanning segment. Residues 167-177 (SLFIAEVLFGT) lie on the Periplasmic side of the membrane. A helical transmembrane segment spans residues 178–200 (MMLASLGPVIISAVVALLVSNLI). Over 201–221 (NHSDALLYNVQLSVTVQARDY) the chain is Cytoplasmic. Residues 222-242 (ALIISTGVLAGLCGPLLLTLM) traverse the membrane as a helical segment. The Periplasmic segment spans residues 243-257 (NACHRGFVSLKLAPP). The chain crosses the membrane as a helical span at residues 258–278 (WQLALGGLIVGLLSLFTPAVW). Residues 279–290 (GNGYSTVQSFLT) are Cytoplasmic-facing. The chain crosses the membrane as a helical span at residues 291–311 (APPLLMIIAGIFLCKLCAVLA). At 312-315 (SSGS) the chain is on the periplasmic side. Residues 316–336 (GAPGGVFTPTLFIGLAIGMLY) form a helical membrane-spanning segment. Residues 337-351 (GRSLGLWFPDGEEIT) lie on the Cytoplasmic side of the membrane. Residues 352 to 372 (LLLGLTGMATLLAATTHAPIM) traverse the membrane as a helical segment. Topologically, residues 373–379 (STLMICE) are periplasmic. A helical membrane pass occupies residues 380–400 (MTGEYQLLPGLLIACVIASVI). Residues 401-418 (SRTLHRDSIYRQHTAQHS) are Cytoplasmic-facing.

Belongs to the chloride channel (TC 2.A.49) family. ClcB subfamily.

The protein resides in the cell inner membrane. In terms of biological role, probably acts as an electrical shunt for an outwardly-directed proton pump that is linked to amino acid decarboxylation, as part of the extreme acid resistance (XAR) response. In Escherichia coli (strain K12), this protein is Voltage-gated ClC-type chloride channel ClcB (clcB).